Reading from the N-terminus, the 205-residue chain is Urease accessory protein UreG (205 aa).

Residue Gly10–Thr17 participates in GTP binding.

Belongs to the SIMIBI class G3E GTPase family. UreG subfamily. In terms of assembly, homodimer. UreD, UreF and UreG form a complex that acts as a GTP-hydrolysis-dependent molecular chaperone, activating the urease apoprotein by helping to assemble the nickel containing metallocenter of UreC. The UreE protein probably delivers the nickel.

It is found in the cytoplasm. Facilitates the functional incorporation of the urease nickel metallocenter. This process requires GTP hydrolysis, probably effectuated by UreG. The protein is Urease accessory protein UreG of Corynebacterium glutamicum (strain ATCC 13032 / DSM 20300 / JCM 1318 / BCRC 11384 / CCUG 27702 / LMG 3730 / NBRC 12168 / NCIMB 10025 / NRRL B-2784 / 534).